Here is a 534-residue protein sequence, read N- to C-terminus: Probable alkaline/neutral invertase D (534 aa).

2 positions are modified to phosphoserine: Ser-7 and Ser-37. The residue at position 55 (Thr-55) is a Phosphothreonine. Ser-532 is modified (phosphoserine).

It belongs to the glycosyl hydrolase 100 family.

The catalysed reaction is Hydrolysis of terminal non-reducing beta-D-fructofuranoside residues in beta-D-fructofuranosides.. In terms of biological role, invertase that cleaves sucrose into glucose and fructose. In Arabidopsis thaliana (Mouse-ear cress), this protein is Probable alkaline/neutral invertase D.